Consider the following 165-residue polypeptide: Mating factor alpha-1 (165 aa).

The or 20 signal peptide spans 1–19; that stretch reads MRFPSIFTAVLFAASSALA. 4 propeptides span residues 20–89, 105–110, 126–131, and 147–152; these read APVN…EAEA, EAEAEA, and EADAEA.

Functionally, the active factor is excreted into the culture medium by haploid cells of the alpha mating type and acts on cells of the opposite mating type (type A). It mediates the conjugation process between the two types by inhibiting the initiation of DNA synthesis in type a cells and synchronizing them with type alpha. The chain is Mating factor alpha-1 (MF(ALPHA)1) from Saccharomyces cerevisiae (strain ATCC 204508 / S288c) (Baker's yeast).